A 118-amino-acid chain; its full sequence is Holo-[acyl-carrier-protein] synthase (118 aa).

2 residues coordinate Mg(2+): Asp-8 and Glu-58.

It belongs to the P-Pant transferase superfamily. AcpS family. It depends on Mg(2+) as a cofactor.

The protein localises to the cytoplasm. It carries out the reaction apo-[ACP] + CoA = holo-[ACP] + adenosine 3',5'-bisphosphate + H(+). Its function is as follows. Transfers the 4'-phosphopantetheine moiety from coenzyme A to a Ser of acyl-carrier-protein. This chain is Holo-[acyl-carrier-protein] synthase, found in Streptococcus equi subsp. zooepidemicus (strain H70).